Reading from the N-terminus, the 138-residue chain is Protein FAM136A (138 aa).

N-acetylalanine is present on Ala-2. A phosphothreonine mark is found at Thr-124 and Thr-126.

Belongs to the FAM136 family.

The protein is Protein FAM136A (FAM136A) of Homo sapiens (Human).